The primary structure comprises 344 residues: tRNA N6-adenosine threonylcarbamoyltransferase (344 aa).

Residues His-112 and His-116 each contribute to the Fe cation site. Substrate-binding positions include 134–138, Asp-167, Gly-180, and Asn-280; that span reads LASGG. Fe cation is bound at residue Asp-308.

It belongs to the KAE1 / TsaD family. Fe(2+) is required as a cofactor.

It is found in the cytoplasm. It catalyses the reaction L-threonylcarbamoyladenylate + adenosine(37) in tRNA = N(6)-L-threonylcarbamoyladenosine(37) in tRNA + AMP + H(+). In terms of biological role, required for the formation of a threonylcarbamoyl group on adenosine at position 37 (t(6)A37) in tRNAs that read codons beginning with adenine. Is involved in the transfer of the threonylcarbamoyl moiety of threonylcarbamoyl-AMP (TC-AMP) to the N6 group of A37, together with TsaE and TsaB. TsaD likely plays a direct catalytic role in this reaction. In Rickettsia peacockii (strain Rustic), this protein is tRNA N6-adenosine threonylcarbamoyltransferase.